We begin with the raw amino-acid sequence, 682 residues long: MEAILKLFGEYFFKFCKMSGYDRMLRTLGGNLTEFIENLDALHSYLALSYQEMNAPSFRVEEGADGAMLLHYYSDRHGLCHIVPGIIEAVAKDFFDTDVAMSILDMNEEVERTGKKEHVVFLVVQKAHRQIRGAKASRPQGSEDSQADQEALQGTLLRMKERYLNIPVCPGEKSHSTAVRASVLFGKGPLRDTFQPVYPERLWVEEEVFCDAFPFHIVFDEALRVKQAGVNIQKYVPGILTQKFALDEYFSIIHPQVTFNISSICKFINSQFVLKTRKEMMPKARKSQPMLKLRGQMIWMESLRCMIFMCSPNVRSLQELEESKMHLSDIAPHDTTRDLILLNQQRLAEMELSCQLEKKKEELRVLSNHLAIEKKKTETLLYAMLPEHVANQLKEGRKVAAGEFETCTILFSDVVTFTNICAACEPIQIVNMLNSMYSKFDRLTSVHDVYKVETIGDAYMVVGGVPVPVESHAQRVANFALGMRISAKEVMNPVTGEPIQIRVGIHTGPVLAGVVGDKMPRYCLFGDTVNTASRMESHGLPSKVHLSPTAHRALKNKGFEIVRRGEIEVKGKGKMTTYFLIQNLNATEDEIMGRPSAPADGKEVCTPGNQVRKSPAVPRNTDHQQQVYKGDPADASNEVTLAGSPVAGRNSTDAVNNQPSPDETKTSVVASGPVLSAFCVVL.

A heme-binding site is contributed by His-43. The 129-residue stretch at 408–536 (TILFSDVVTF…DTVNTASRME (129 aa)) folds into the Guanylate cyclase domain. The segment at 592–667 (MGRPSAPADG…QPSPDETKTS (76 aa)) is disordered. Positions 649-667 (RNSTDAVNNQPSPDETKTS) are enriched in polar residues.

It belongs to the adenylyl cyclase class-4/guanylyl cyclase family. As to quaternary structure, heterodimer of an alpha and a beta chain. The cofactor is heme. Kidney and liver.

The protein resides in the cytoplasm. It carries out the reaction GTP = 3',5'-cyclic GMP + diphosphate. With respect to regulation, activated by nitric oxide in the presence of magnesium or manganese ions. This is Guanylate cyclase soluble subunit beta-2 (Gucy1b2) from Rattus norvegicus (Rat).